Reading from the N-terminus, the 385-residue chain is UPF0284 protein PMM0439 (385 aa).

This sequence belongs to the UPF0284 family.

This is UPF0284 protein PMM0439 from Prochlorococcus marinus subsp. pastoris (strain CCMP1986 / NIES-2087 / MED4).